The chain runs to 248 residues: CKLF-like MARVEL transmembrane domain-containing protein 2 (248 aa).

Residues 1–63 (MAPKAAKGAK…KAVQPKHEVG (63 aa)) are disordered. Residues 12–22 (EPAPAPPPPGA) are compositionally biased toward pro residues. Residues 23–63 (KPEEDKKDGKEPSDKPQKAVQDHKEPSDKPQKAVQPKHEVG) are compositionally biased toward basic and acidic residues. The MARVEL domain occupies 82 to 204 (FWLLGHAEIK…DVCLQRNHFR (123 aa)). The next 3 helical transmembrane spans lie at 116 to 136 (LIIT…SFAI), 147 to 167 (ISDL…VVFA), and 178 to 198 (YLLA…DVCL). Residues 208–248 (AKKHMLVPPPGKEKGPQQGKGPEPAKPPEPGKPPGPAKGKK) are disordered. The span at 231–248 (PAKPPEPGKPPGPAKGKK) shows a compositional bias: pro residues.

Belongs to the chemokine-like factor family. As to expression, highly expressed in testis.

The protein resides in the membrane. The chain is CKLF-like MARVEL transmembrane domain-containing protein 2 (CMTM2) from Homo sapiens (Human).